The primary structure comprises 573 residues: E3 ubiquitin-protein ligase TRIM23 (573 aa).

Residues 31–76 (CGVCEDVFSLQGDKVPRLLLCGHTVCHDCLTRLPLHGRAIRCPFDR) form an RING-type; degenerate zinc finger. The segment at 122–168 (ESIIRCDEDEAHVASVYCTVCATHLCSECSQVTHSTKTLAKHRRVPL) adopts a B box-type; degenerate zinc-finger fold. Positions 351 to 378 (RVVLAKQEITRLLETLQKQQQQFTEVAD) form a coiled coil. Residues 390–573 (FTKDNRVYHG…LVAAGVLDVA (184 aa)) form an ARF-like region. GTP contacts are provided by residues 411-418 (LDGAGKTT), 454-458 (VGGKH), and 513-516 (KQDV).

It in the C-terminal section; belongs to the small GTPase superfamily. Arf family. In terms of assembly, homodimer. Interacts with PSCD1. Interacts with UBE2D2. Interacts with TBK1 (via N-terminal kinase domain) and p62/SQSTM1.

Its subcellular location is the cytoplasm. The protein localises to the endomembrane system. It is found in the golgi apparatus membrane. It localises to the lysosome membrane. The catalysed reaction is S-ubiquitinyl-[E2 ubiquitin-conjugating enzyme]-L-cysteine + [acceptor protein]-L-lysine = [E2 ubiquitin-conjugating enzyme]-L-cysteine + N(6)-ubiquitinyl-[acceptor protein]-L-lysine.. It functions in the pathway protein modification; protein ubiquitination. Acts as an E3 ubiquitin-protein ligase. Plays an essential role in autophagy activation during viral infection. Mechanistically, activates TANK-binding kinase 1/TBK1 by facilitating its dimerization and ability to phosphorylate the selective autophagy receptor SQSTM1. In order to achieve this function, TRIM23 mediates 'Lys-27'-linked auto-ubiquitination of its ADP-ribosylation factor (ARF) domain to induce its GTPase activity and its recruitment to autophagosomes. The polypeptide is E3 ubiquitin-protein ligase TRIM23 (Trim23) (Rattus norvegicus (Rat)).